A 240-amino-acid chain; its full sequence is Serine protease SplB (240 aa).

An N-terminal signal peptide occupies residues 1–36 (MNKNVVIKSLATLTILTSVTGIGTTLVEEVQQTAKA). Active-site charge relay system residues include His-75, Asp-113, and Ser-193.

Belongs to the peptidase S1B family.

The protein localises to the secreted. Its function is as follows. Serine protease that cleaves specifically after the sequence Trp-Glu-Leu-Gln. The sequence is that of Serine protease SplB (splB) from Staphylococcus aureus (strain Mu3 / ATCC 700698).